The following is a 377-amino-acid chain: Protein RecA (377 aa).

Residue 66–73 coordinates ATP; that stretch reads GPESSGKT. The interval 329–377 is disordered; the sequence is VGVRPEEPTAEPGADAAVTSAAAATDDTAKTVSAPAAKTTKSKAAAAKS. Residues 342-377 show a composition bias toward low complexity; sequence ADAAVTSAAAATDDTAKTVSAPAAKTTKSKAAAAKS.

It belongs to the RecA family.

Its subcellular location is the cytoplasm. Functionally, can catalyze the hydrolysis of ATP in the presence of single-stranded DNA, the ATP-dependent uptake of single-stranded DNA by duplex DNA, and the ATP-dependent hybridization of homologous single-stranded DNAs. It interacts with LexA causing its activation and leading to its autocatalytic cleavage. The chain is Protein RecA from Streptomyces avermitilis (strain ATCC 31267 / DSM 46492 / JCM 5070 / NBRC 14893 / NCIMB 12804 / NRRL 8165 / MA-4680).